Reading from the N-terminus, the 317-residue chain is Melanocyte-stimulating hormone receptor (317 aa).

The Extracellular portion of the chain corresponds to 1–37 (MPVLGSQRRLLGSLNCTPPATFPLTLAPNRTGPQCLE). An N-linked (GlcNAc...) asparagine glycan is attached at Asn-29. Residues 38–63 (VAIPDGLFLSLGLVSLVENVLVVAAI) traverse the membrane as a helical segment. Residues 64–72 (AKNRNLQSP) are Cytoplasmic-facing. The chain crosses the membrane as a helical span at residues 73–93 (MYYFICCLAMSDLLVSVSNVL). Residues 94–118 (ETAVMLLLEAGALAARAAVVQQLDN) lie on the Extracellular side of the membrane. A helical transmembrane segment spans residues 119-140 (VIDVLICGSMVSSLCFLGAIAV). The Cytoplasmic portion of the chain corresponds to 141 to 163 (DRYISIFYALRYHSVVTLPRAWR). The chain crosses the membrane as a helical span at residues 164–183 (IIAAIWVASILTSLLFITYY). At 184–191 (NHTVVLLC) the chain is on the extracellular side. Residues 192-211 (LVGFFIAMLALMAVLYVHML) form a helical membrane-spanning segment. The Cytoplasmic segment spans residues 212–240 (ARACQHARGIARLQKRQRPIHQGFGLKGA). Residues 241-266 (ATLTILLGVFFLCWGPFFLHLSLIVL) traverse the membrane as a helical segment. The Extracellular portion of the chain corresponds to 267-279 (CPQHPTCGCIFKN). The chain crosses the membrane as a helical span at residues 280–300 (FNLFLALIICNAIVDPLIYAF). Over 301-317 (RSQELRKTLQEVLQCSW) the chain is Cytoplasmic. Residue Cys-315 is the site of S-palmitoyl cysteine attachment.

This sequence belongs to the G-protein coupled receptor 1 family. In terms of assembly, interacts with MGRN1, but does not undergo MGRN1-mediated ubiquitination; this interaction competes with GNAS-binding and thus inhibits agonist-induced cAMP production. Interacts with OPN3; the interaction results in a decrease in MC1R-mediated cAMP signaling and ultimately a decrease in melanin production in melanocytes.

It localises to the cell membrane. In terms of biological role, receptor for MSH (alpha, beta and gamma) and ACTH. The activity of this receptor is mediated by G proteins which activate adenylate cyclase. Mediates melanogenesis, the production of eumelanin (black/brown) and phaeomelanin (red/yellow), via regulation of cAMP signaling in melanocytes. The chain is Melanocyte-stimulating hormone receptor (MC1R) from Cervus elaphus (Red deer).